The primary structure comprises 245 residues: 2,3-bisphosphoglycerate-dependent phosphoglycerate mutase (245 aa).

Residues 8-15 (RHGQSLWN), 21-22 (TG), arginine 60, 87-90 (ERHY), lysine 98, 114-115 (RR), and 183-184 (GN) each bind substrate. Histidine 9 acts as the Tele-phosphohistidine intermediate in catalysis. Glutamate 87 (proton donor/acceptor) is an active-site residue.

Belongs to the phosphoglycerate mutase family. BPG-dependent PGAM subfamily.

It carries out the reaction (2R)-2-phosphoglycerate = (2R)-3-phosphoglycerate. Its pathway is carbohydrate degradation; glycolysis; pyruvate from D-glyceraldehyde 3-phosphate: step 3/5. Catalyzes the interconversion of 2-phosphoglycerate and 3-phosphoglycerate. The sequence is that of 2,3-bisphosphoglycerate-dependent phosphoglycerate mutase from Bacillus anthracis (strain A0248).